A 275-amino-acid chain; its full sequence is uncharacterized protein (275 aa).

A run of 6 helical transmembrane segments spans residues 25 to 45 (LGYF…FMTA), 70 to 90 (LLFF…LSAI), 107 to 127 (IGNF…LRFV), 149 to 169 (FGQW…IVQF), 203 to 223 (IARA…AMTA), and 247 to 267 (ILSI…MKGI).

It localises to the cell membrane. This is an uncharacterized protein from Bacillus subtilis (strain 168).